We begin with the raw amino-acid sequence, 358 residues long: UDP-N-acetylglucosamine--N-acetylmuramyl-(pentapeptide) pyrophosphoryl-undecaprenol N-acetylglucosamine transferase (358 aa).

UDP-N-acetyl-alpha-D-glucosamine-binding positions include 13–15 (TAG), Arg166, Ser196, and Gln291.

Belongs to the glycosyltransferase 28 family. MurG subfamily.

Its subcellular location is the cell membrane. The enzyme catalyses di-trans,octa-cis-undecaprenyl diphospho-N-acetyl-alpha-D-muramoyl-L-alanyl-D-glutamyl-meso-2,6-diaminopimeloyl-D-alanyl-D-alanine + UDP-N-acetyl-alpha-D-glucosamine = di-trans,octa-cis-undecaprenyl diphospho-[N-acetyl-alpha-D-glucosaminyl-(1-&gt;4)]-N-acetyl-alpha-D-muramoyl-L-alanyl-D-glutamyl-meso-2,6-diaminopimeloyl-D-alanyl-D-alanine + UDP + H(+). It participates in cell wall biogenesis; peptidoglycan biosynthesis. Cell wall formation. Catalyzes the transfer of a GlcNAc subunit on undecaprenyl-pyrophosphoryl-MurNAc-pentapeptide (lipid intermediate I) to form undecaprenyl-pyrophosphoryl-MurNAc-(pentapeptide)GlcNAc (lipid intermediate II). The polypeptide is UDP-N-acetylglucosamine--N-acetylmuramyl-(pentapeptide) pyrophosphoryl-undecaprenol N-acetylglucosamine transferase (Clostridium botulinum (strain Alaska E43 / Type E3)).